The sequence spans 345 residues: Molybdopterin synthase catalytic subunit (345 aa).

Residues 101-102, K117, and 124-126 contribute to the substrate site; these read HR and KKE.

The protein belongs to the MoaE family. MOCS2B subfamily. As to quaternary structure, heterotetramer; composed of 2 small (Mocs2A) and 2 large (Mocs2B) subunits.

The protein resides in the cytoplasm. The enzyme catalyses 2 [molybdopterin-synthase sulfur-carrier protein]-C-terminal-Gly-aminoethanethioate + cyclic pyranopterin phosphate + H2O = molybdopterin + 2 [molybdopterin-synthase sulfur-carrier protein]-C-terminal Gly-Gly + 2 H(+). It participates in cofactor biosynthesis; molybdopterin biosynthesis. Functionally, catalytic subunit of the molybdopterin synthase complex, a complex that catalyzes the conversion of precursor Z into molybdopterin. Acts by mediating the incorporation of 2 sulfur atoms from thiocarboxylated Mocs2A into precursor Z to generate a dithiolene group. This Drosophila virilis (Fruit fly) protein is Molybdopterin synthase catalytic subunit.